The primary structure comprises 184 residues: MKNVTDSFVSLVNWPSAGSFGFNTDILATNPINLSVVLGVLIFFGKGVLSDLLDNRKQRILSTIRNSEELRVGAIEQLEKARARLRKVEMEADEFRVNGYSEIEREKLNLINSTYKNLERLENYKNETIHFEQQRAINQVRQRVFQQALQGALGTLNSCLNNELHLRTISANIGMFGAMKEITD.

A helical membrane pass occupies residues 27–49 (LATNPINLSVVLGVLIFFGKGVL).

The protein belongs to the ATPase B chain family. F-type ATPases have 2 components, F(1) - the catalytic core - and F(0) - the membrane proton channel. F(1) has five subunits: alpha(3), beta(3), gamma(1), delta(1), epsilon(1). F(0) has four main subunits: a(1), b(1), b'(1) and c(10-14). The alpha and beta chains form an alternating ring which encloses part of the gamma chain. F(1) is attached to F(0) by a central stalk formed by the gamma and epsilon chains, while a peripheral stalk is formed by the delta, b and b' chains.

It localises to the plastid. It is found in the chloroplast thylakoid membrane. Its function is as follows. F(1)F(0) ATP synthase produces ATP from ADP in the presence of a proton or sodium gradient. F-type ATPases consist of two structural domains, F(1) containing the extramembraneous catalytic core and F(0) containing the membrane proton channel, linked together by a central stalk and a peripheral stalk. During catalysis, ATP synthesis in the catalytic domain of F(1) is coupled via a rotary mechanism of the central stalk subunits to proton translocation. In terms of biological role, component of the F(0) channel, it forms part of the peripheral stalk, linking F(1) to F(0). The polypeptide is ATP synthase subunit b, chloroplastic (Buxus microphylla (Littleleaf boxwood)).